We begin with the raw amino-acid sequence, 282 residues long: Pantothenate synthetase (282 aa).

30–37 contributes to the ATP binding site; the sequence is MGALHQGH. His37 serves as the catalytic Proton donor. Gln61 is a (R)-pantoate binding site. Beta-alanine is bound at residue Gln61. 149–152 lines the ATP pocket; that stretch reads GEKD. A (R)-pantoate-binding site is contributed by Gln155. ATP-binding positions include Leu178 and 186-189; that span reads MSSR.

It belongs to the pantothenate synthetase family. As to quaternary structure, homodimer.

It localises to the cytoplasm. It catalyses the reaction (R)-pantoate + beta-alanine + ATP = (R)-pantothenate + AMP + diphosphate + H(+). The protein operates within cofactor biosynthesis; (R)-pantothenate biosynthesis; (R)-pantothenate from (R)-pantoate and beta-alanine: step 1/1. Its function is as follows. Catalyzes the condensation of pantoate with beta-alanine in an ATP-dependent reaction via a pantoyl-adenylate intermediate. This Flavobacterium psychrophilum (strain ATCC 49511 / DSM 21280 / CIP 103535 / JIP02/86) protein is Pantothenate synthetase.